A 5005-amino-acid chain; its full sequence is MDQRKNESIVPSITQLEDFLTEHNSNVVWLLVATILSCGWIIYLTYYNSRNVGLILTLVLNRLYKHGYIHIGSFSFSVLSGKVMVREIYYITEDMSIRIQDGFIIFRWWKMYNPKQKQHDPKAETRLYITVNDFEFHVYNRSDLYGRLQELFGLEPTIIPPKKDDDKTREIGRTRTQSKIERVKVKTESQDPTSSWRSLIPVIKVNVSTGRLAFGNHYQPQTLCINFDDAFLTYTTKPPSSHLDQFMHIVKGKLENVRVMLVPSPRYVGLQNDEPPRLMGEGFVVMQSNDVDIYYYMDEPGLVPEETEENIEGEMSSEDCKLQDLPPCWGLDIVCGKGTDFNYGPWADRQRDCLWKFFFPPDYQVLKVSEIAQPGRPRQILAFELRMNIIADATIDLLFTKNRETNAVHVNVGAGSYLEINIPMTVEENGYTPAIKGQLLHVDATTSMQYRTLLEAEMLAFHINASYPRIWNMPQTWQCELEVYKATYHFIFAQKNFFTDLIQDWSSDSPPDIFSFVPYTWNFKIMFHQFEMIWAANQHNWIDCSTKQQENVYLAACGETLNIDFSLPFTDFVPATCNTKFSLRGEDVDLHLFLPDCHPSKYSLFMLVKNCHPNKMIHDTGIPAECQSGQKTVKPKWRNVTQEKSGWVECWTVPSVMLTIDYTWHPIYPQKADEQLKQSLSEMEETMLSVLRPSQKTSDRVVSSPSTSSRPPIDPSELPPDKLHVEMELSPDSQITLYGPLLNAFLCIKENYFGEDDMYMDFEEVISSPVLSLSTSSSSGWTAVGMENDKKENEGSAKSIHPLALRPWDITVLVNLYKVHGRLPVHGTTDGPECPTAFLERLCFEMKKGFRETMLQLILSPLNVFVSDNYQQRPPVDEVLREGHINLSGLQLRAHAMFSAEGLPLGSDSLEYAWLIDVQAGSLTAKVTAPQLACLLEWGQTFVFHVVCREYELERPKSVIICQHGIDRRFCESKLSCIPGPCPTSDDLKYTMIRLAVDGADIYIVEHGCATNIKMGAIRVANCNLHNQSVGEGISAAIQDFQVRQYIEQLNNCRIGLQPAVLRRAYWLEAGSANLGLITVDIALAADHHSKHEAQRHFLETHDARTKRLWFLWPDDILKNKRCRNKCGCLGGCRFFGGTVTGLDFFKLEELTPSSSSAFSSTSAESDMYYGQSLLQPGEWIITKEIPKIIDGNVNGMKRKEWENKSVGIEVERKTQHLSLQVPLRSHSSSSSSEENSSSSAAQPLLAGEKESPSSVADDHLVQKEFLHGTKRDDGQASIPTEISGNSPVSPNTQDKSVGQSPLRSPLKRQASVCSTRLGSTKSLTAAFYGDKQPVTVGVQFSSDVSRSDENVLDSPKQRRSFGSFPYTPSADSNSFHQYRSMDSSMSMADSEAYFSAAEEFEPISSDEGPGTYPGRKKKKKQTQQIDYSRGSIYHSVEGPLTGHGESIQDSRTLPFKTHPSQASFVSALGGEDDVIEHLYIVEGEKTVESEQITPQQPVMNCYQTYLTQFQVINWSVKHPTNKRTSKSSLHRPLDLDTPTSEESSSSFEQLSVPTFKVIKQGLTANSLLDRGMQLSGSTSNTPYTPLEKKLADNTDDETLTEEWTLDQPVSQTRTTAIVEVKGTVDIVLTPLVAEALDRYIEAMVHCASTRHPAAIVDDLHAKVLREAVQNSKTTFSENLSSKQDIRGTKTEQSTIGTTNQGQAQTNLTMKQDNVTIKGLQTNVSIPKVNLCLLQASVEESPTTAPSRSVTHVSLVALCFDRIATQVRMNRGVVEETSNNAEPGRTSNFDRYVHATKMQPQSSGSLRSNAGAEKGKEIAAKLNIHRVHGQLRGLDTTDIGTCAITAIPFEKSKVLFTLEELDEFTFVDETDQQAVPDVTRIGPSQEKWGWIMFECGLENLTIKGGRQSGAVLYNSFGIMGKASDTERGGVLTSNNSSDSPTGSGYNTDVSDDNLPCDRTSPSSDLNGNSVSDEQDEGVESDDLKKDLPLMPPPPDSCSMKLTIKEIWFSFAAPTNVRSHTHAFSRQLNLLSTATPAVGAWLVPIDQLKSSLNKLETEGTLRICAVMGCIMTEALENKSVHFPLRSKYNRLTKVARFLQENPSCLLCNILHHYLHQANYSIIDDATMSDGLPALVTLKKGLVALARQWMKFIVVTPAFKGVSLHRPAQPLKPQIAMDHEHEDGLGLDNGGGLQSDTSADGAEFEFDAATVSEHTMLLEGTANRPPPGSSGPVTGAEIMRKLSKTHTHSDSALKIKGIHPYHSLSYTSGDTATDSPVHVGRAGMPVKDSPRKESLLSYLTGSFPSLHNLLEGTPQRSSAAVKSSSLTRTGNTVATDMLSEHPLLSEPSSVSFYNWMSNAVGNRGSVLQESPVTKSGHNSLPTGVAPNLPTIPSASDFNTVLSSDQNTLDGTHSQHSTSQDDVAGVEEANQGFPAVQLADAQVVFKPLLSHTGIQSQDTMPFCYRMYFGEHLSFSGTLDCLRADIVDSDTAKERKGKRARRQGHVNLPPLEFKPALMLGTFSISAVVMEKSVCTPQNSTSALSFHDLSKRYYNTFHCNFTISCQSISQHVDMALVRLIHQFSTMIDDIKATQTDIKLSRYTAGSASPTPTFKTRKHRDFRSSDFSRSSRGSLNGGNRVNNAKNKRTNNENNKKESRNKNSLGRSERRTSKVSRKGSKDVVDHMTIHMDDSDSITVSEQSEPSAECWQNMYKLLNFYSLISDPTGILEKSSETFGPAGVRSPTEPTCKVVFENEQDNSSLTKTQRKRSLVTSEPQHVTLIVFGIGMVNRTHLEADIGGLTMESELKRIHGSFTLKEKMKDVLHQKMTETCATAHIGGVNIVLLEGITPNIQLEDFPTSPTSTAKQEFLTVVKCSIAKSQALYSAQRGLKTNNAAVFKVGAISINIPQHPATLHSMMVRSSHQLSKQISDLIRQPSTAPQPVKEDIATPLPSEKTPTSVNQTPVETNEFPQLPEGLEKKPIVLKFSAMLDGIAIGAALLPSLKAEYKMGRMRSHGMTGAQTRFTFELPNHRLRFTSKVSATDMSTIPPSASLNLPPVTMSGKYIMEEHDSYSDQVWSIDELPSKQGYYLQGNYLRCVAEVGSFEHNLTTDLLNHLVFVQKVFMKEVNEVIQKVSGGEQPIPLWNEHDGTADGDKPKILLYSLNLQFKGIQVTATTPSMRAVRFETGLIELELSNRLQTKASPGSSSYLKLFGKCQVDLNLALGQIVKHQVYEEAGSDFHQVAYFKTRIGLRNALREEISGSSDREAVLITLNRPIVYAQPVAFDRAVLFWLNYKAAYDNWNEQRMALHKDIHMATKEVVDMLPGIQQTSAQAFGTLFLQLTVNDLGICLPITNTAQSNHTGDLDTGSALVLTIESTLITACSSESLVSKGHFKNFCIRFADGFETSWDDWKPEIHGDLVMNACVVPDGTYEVCSRTTGQAAAESSSAGTWTLNVLWKMCGIDVHMDPNIGKRLNALGNTLTTLTGEEDIDDIADLNSVNIADLSDEDEVDTMSPTIHTEATDYRRQAASASQPGELRGRKIMKRIVDIRELNEQAKVIDDLKKLGASEGTINQEIQRYQQLESVAVNDIRRDVRKKLRRSSMRAASLKDKWGLSYKPSYSRSKSISASGRPPLKRMERASSRVGETEELPEIRVDAASPGPRVTFNIQDTFPEETELDLLSVTIEGPSHYSSNSEGSCSVFSSPKTPGGFSPGIPFQTEEGRRDDSLSSTSEDSEKDEKDEDHERERFYIYRKPSHTSRKKATGFAAVHQLFTERWPTTPVNRSLSGTATERNIDFELDIRVEIDSGKCVLHPTTLLQEHDDISLRRSYDRSSRSLDQDSPSKKKKFQTNYASTTHLMTGKKVPSSLQTKPSDLETTVFYIPGVDVKLHYNSKTLKTESPNASRGSSLPRTLSKESKLYGMKDSATSPPSPPLPSTVQSKTNTLLPPQPPPIPAAKGKGSGGVKTAKLYAWVALQSLPEEMVISPCLLDFLEKALETIPITPVERNYTAVSSQDEDMGHFEIPDPMEESTTSLVSSSTSAYSSFPVDVVVYVRVQPSQIKFSCLPVSRVECMLKLPSLDLVFSSNRGELETLGTTYPAETLSPGGNATQSGTKTSASKTGIPGSSGLGSPLGRSRHSSSQSDLTSSSSSSSGLSFTACMSDFSLYVFHPYGAGKQKTAVSGLTPGSGGLGNVDEEPTSVTGRKDSLSINLEFVKVSLSRIRRSGGASFFESQSVSKSASKMDTTLINISAVCDIGSASFKYDMRRLSEILAFPRAWYRRSIARRLFLGDQTINLPTSGPGTPDSIEGVSQHLSPESSRKAYCKTWEQPSQSASFTHMPQSPNVFNEHMTNSTMSPGTVGQSLKSPASIRSRSVSDSSVPRRDSLSKTSTPFNKSNKAASQQGTPWETLVVFAINLKQLNVQMNMSNVMGNTTWTTSGLKSQGRLSVGSNRDREISMSVGLGRSQLDSKGGVVGGTIDVNALEMVAHISEHPNQQPSHKIQITMGSTEARVDYMGSSILMGIFSNADLKLQDEWKVNLYNTLDSSITDKSEIFVHGDLKWDIFQVMISRSTTPDLIKIGMKLQEFFTQQFDTSKRALSTWGPVPYLPPKTMTSNLEKSSQEQLLDAAHHRHWPGVLKVVSGCHISLFQIPLPEDGMQFGGSMSLHGNHMTLACFHGPNFRSKSWALFHLEEPNIAFWTEAQKIWEDGSSDHSTYIVQTLDFHLGHNTMVTKPCGALESPMATITKITRRRHENPPHGVASVKEWFNYVTATRNEELNLLRNVDANNTENSTTVKNSSLLSGFRGGSSYNHETETIFALPRMQLDFKSIHVQEPQEPSLQDASLKPKVECSVVTEFTDHICVTMDAELIMFLHDLVSAYLKEKEKAIFPPRILSTRPGQKSPIIIHDDNSSDKDREDSITYTTVDWRDFMCNTWHLEPTLRLISWTGRKIDPVGVDYILQKLGFHHARTTIPKWLQRGVMDPLDKVLSVLIKKLGTALQDEKEKKGKDKEEH.

The chain crosses the membrane as a helical span at residues 26–46 (NVVWLLVATILSCGWIIYLTY). 3 disordered regions span residues 691 to 721 (LRPSQKTSDRVVSSPSTSSRPPIDPSELPPD), 1218 to 1257 (LSLQVPLRSHSSSSSSEENSSSSAAQPLLAGEKESPSSVA), and 1269 to 1310 (GTKR…LKRQ). Composition is skewed to low complexity over residues 700–711 (RVVSSPSTSSRP) and 1226–1240 (SHSSSSSSEENSSSS). A compositionally biased stretch (basic and acidic residues) spans 1248 to 1257 (GEKESPSSVA). Polar residues predominate over residues 1278 to 1303 (SIPTEISGNSPVSPNTQDKSVGQSPL). Phosphoserine is present on residues Ser1301, Ser1305, and Ser1323. Phosphothreonine is present on Thr1325. Disordered stretches follow at residues 1343-1376 (SDVSRSDENVLDSPKQRRSFGSFPYTPSADSNSF), 1400-1427 (EFEPISSDEGPGTYPGRKKKKKQTQQID), 1521-1548 (TNKRTSKSSLHRPLDLDTPTSEESSSSF), and 1676-1704 (FSENLSSKQDIRGTKTEQSTIGTTNQGQA). A phosphoserine mark is found at Ser1355 and Ser1406. Residues 1521–1530 (TNKRTSKSSL) show a composition bias toward basic residues. Over residues 1691–1704 (TEQSTIGTTNQGQA) the composition is skewed to polar residues. Phosphoserine is present on residues Ser1805 and Ser1808. Disordered regions lie at residues 1924-1991 (DTER…PLMP), 2401-2420 (SDQNTLDGTHSQHSTSQDDV), and 2598-2677 (TAGS…KDVV). Composition is skewed to polar residues over residues 1931–1948 (LTSNNSSDSPTGSGYNTD), 1959–1971 (TSPSSDLNGNSVS), 2401–2418 (SDQNTLDGTHSQHSTSQD), and 2598–2608 (TAGSASPTPTF). A phosphoserine mark is found at Ser2601 and Ser2603. Residues 2619–2638 (SDFSRSSRGSLNGGNRVNNA) show a composition bias toward low complexity. A compositionally biased stretch (basic and acidic residues) spans 2643–2665 (TNNENNKKESRNKNSLGRSERRT). Ser2755 is subject to Phosphoserine. Residues 2928-2967 (RQPSTAPQPVKEDIATPLPSEKTPTSVNQTPVETNEFPQL) form a disordered region. Polar residues predominate over residues 2949–2964 (KTPTSVNQTPVETNEF). Ser3562 is modified (phosphoserine). The segment covering 3612–3622 (PSYSRSKSISA) has biased composition (polar residues). Disordered stretches follow at residues 3612-3661 (PSYS…VTFN), 3686-3744 (SSNS…ERFY), 3821-3843 (RRSYDRSSRSLDQDSPSKKKKFQ), 3914-3954 (YGMK…KGKG), 4088-4146 (GTTY…SSSS), and 4325-4394 (QSAS…KAAS). Ser3653 is subject to Phosphoserine. The span at 3686–3700 (SSNSEGSCSVFSSPK) shows a compositional bias: polar residues. Residues 3727-3736 (EDSEKDEKDE) show a composition bias toward acidic residues. Basic and acidic residues predominate over residues 3821–3837 (RRSYDRSSRSLDQDSPS). 2 stretches are compositionally biased toward polar residues: residues 3931 to 3940 (TVQSKTNTLL) and 4098 to 4113 (PGGNATQSGTKTSASK). The segment covering 4122-4146 (LGSPLGRSRHSSSQSDLTSSSSSSS) has biased composition (low complexity). Ser4124 carries the phosphoserine modification. The segment covering 4325–4358 (QSASFTHMPQSPNVFNEHMTNSTMSPGTVGQSLK) has biased composition (polar residues). Residues 4359-4372 (SPASIRSRSVSDSS) are compositionally biased toward low complexity. The segment covering 4381–4394 (KTSTPFNKSNKAAS) has biased composition (polar residues).

In terms of tissue distribution, highly expressed in testis and ovary. Weakly or not expressed in other tissues.

Its subcellular location is the cell membrane. The protein localises to the endoplasmic reticulum membrane. It is found in the mitochondrion membrane. Tube-forming lipid transport protein which provides phosphatidylethanolamine for glycosylphosphatidylinositol (GPI) anchor synthesis in the endoplasmic reticulum. Plays a role in endosomal trafficking and endosome recycling. Also involved in the actin cytoskeleton and cilia structural dynamics. Acts as a regulator of phagocytosis. This chain is Bridge-like lipid transfer protein family member 1, found in Homo sapiens (Human).